The sequence spans 902 residues: MLGKIVTKIFGSRNERAIRRMRKVVAQINQLEPEFEKLTDDELKAKTDEFRERLKKGEKEEDILPEAFATVREASKRVFGMRHFDVQLIGGMVLNDRCIAEMRTGEGKTLTATLPAYLNALSGKGVHVVTVNDYLAQRDAENNRPLFEFLGLSVGINLPNMAPPAKREAYNADITYGTNNEFGFDYLRDNMAFSPEERVQRKLHYALVDEVDSILIDEARTPLIISGPAEDSSELYIKMNKVIPHLVPQEKEDSDTFQGEGDYSVDEKTRQVNITERGLVKIEGLLAEAGMMKEGESLYSPANIMLMHHVTAALRAHALFTKDVDYIVKDGEVIIVDEHTGRTMQGRRWSDGLHQAVEAKEGVKIQNENQTLASITFQNYFRLYEKLAGMTGTADTEAFEFNSIYRLETIVIPTNRPMVRKDLPDLVYMNEKGKFAAIIEDIRERTKNGQPVLVGTISIEKSEEISQALTKANIHHNVLNAKFHAMEADIIANAGLPSAVTIATNMAGRGTDIVLGGSWQTEVAKLENPTEEQIEEIKAQWQKRHDAVLASGGLHIIGTERHESRRIDNQLRGRAGRQGDEGSSRFYLSMEDSLMRIFASDKVSGMMRKLGMNETEAIEHPWVTKAIANAQRKVENRNFDIRKQLLEYDDVANDQRRAIYTQRNELLDVADVSETIDSIRQDVFTSMIDNYIPPQSLEEMWDIEGLTACLQNDFDLNLPIKEWLDKEPELHEETLRERILEKSIEVYKAKEEIVSAEMMRNFEKGVMLQTLDSLWKEHLAAMDYLRQGIHLRGYAQKDPKQEYKRESFAMFANMLESLKYEVISTLSKVQVRLPEEVEELERRRREEAERLAKQQQLSHEVTKESQMSAVDGQVASGKKVGRNEPCPCGSGKKYKHCHGKLG.

ATP contacts are provided by residues Gln87, 105 to 109 (GEGKT), and Asp512. The disordered stretch occupies residues 850-902 (RLAKQQQLSHEVTKESQMSAVDGQVASGKKVGRNEPCPCGSGKKYKHCHGKLG). The segment covering 853–868 (KQQQLSHEVTKESQMS) has biased composition (polar residues). The Zn(2+) site is built by Cys886, Cys888, Cys897, and His898. Positions 892–902 (KKYKHCHGKLG) are enriched in basic residues.

This sequence belongs to the SecA family. Monomer and homodimer. Part of the essential Sec protein translocation apparatus which comprises SecA, SecYEG and auxiliary proteins SecDF-YajC and YidC. Requires Zn(2+) as cofactor.

It localises to the cell inner membrane. It is found in the cytoplasm. The catalysed reaction is ATP + H2O + cellular proteinSide 1 = ADP + phosphate + cellular proteinSide 2.. In terms of biological role, part of the Sec protein translocase complex. Interacts with the SecYEG preprotein conducting channel. Has a central role in coupling the hydrolysis of ATP to the transfer of proteins into and across the cell membrane, serving both as a receptor for the preprotein-SecB complex and as an ATP-driven molecular motor driving the stepwise translocation of polypeptide chains across the membrane. The polypeptide is Protein translocase subunit SecA (Proteus mirabilis (strain HI4320)).